The following is a 1342-amino-acid chain: DNA-directed RNA polymerase subunit beta (1342 aa).

It belongs to the RNA polymerase beta chain family. In terms of assembly, the RNAP catalytic core consists of 2 alpha, 1 beta, 1 beta' and 1 omega subunit. When a sigma factor is associated with the core the holoenzyme is formed, which can initiate transcription.

The enzyme catalyses RNA(n) + a ribonucleoside 5'-triphosphate = RNA(n+1) + diphosphate. In terms of biological role, DNA-dependent RNA polymerase catalyzes the transcription of DNA into RNA using the four ribonucleoside triphosphates as substrates. This Yersinia enterocolitica serotype O:8 / biotype 1B (strain NCTC 13174 / 8081) protein is DNA-directed RNA polymerase subunit beta.